Reading from the N-terminus, the 487-residue chain is Protein nucleotidyltransferase YdiU (487 aa).

ATP-binding residues include G90, G92, R93, K113, D125, G126, R176, and R183. The active-site Proton acceptor is D252. Residues N253 and D262 each contribute to the Mg(2+) site. D262 is an ATP binding site.

The protein belongs to the SELO family. The cofactor is Mg(2+). Requires Mn(2+) as cofactor.

It carries out the reaction L-seryl-[protein] + ATP = 3-O-(5'-adenylyl)-L-seryl-[protein] + diphosphate. The enzyme catalyses L-threonyl-[protein] + ATP = 3-O-(5'-adenylyl)-L-threonyl-[protein] + diphosphate. The catalysed reaction is L-tyrosyl-[protein] + ATP = O-(5'-adenylyl)-L-tyrosyl-[protein] + diphosphate. It catalyses the reaction L-histidyl-[protein] + UTP = N(tele)-(5'-uridylyl)-L-histidyl-[protein] + diphosphate. It carries out the reaction L-seryl-[protein] + UTP = O-(5'-uridylyl)-L-seryl-[protein] + diphosphate. The enzyme catalyses L-tyrosyl-[protein] + UTP = O-(5'-uridylyl)-L-tyrosyl-[protein] + diphosphate. Its function is as follows. Nucleotidyltransferase involved in the post-translational modification of proteins. It can catalyze the addition of adenosine monophosphate (AMP) or uridine monophosphate (UMP) to a protein, resulting in modifications known as AMPylation and UMPylation. The chain is Protein nucleotidyltransferase YdiU from Pseudomonas fluorescens (strain ATCC BAA-477 / NRRL B-23932 / Pf-5).